Consider the following 289-residue polypeptide: MKLLVKAPAKINLSLDVLGKRQDGYHEVKMIMTTIDLADRLELTELAEDRIEILSHNRYVPDDQRNLAYQAAKLLKVKFNVKKGVSITIEKTIPVAAGLAGGSSDAAATLRGLNKLWNLGLTIDELAKLGAEIGSDVSFCVYGGTAIATGRGEEIEHIKTPPSCWVVLAKPHIGVSTADVYGNLKLNRVTHPNVDKMVEVINHGDYKGICDTVGNVLEDVTFAMHPEVARIKSQMKRFGADAVLMSGSGPTVFGLVHHDSRMHRIYNGLKGFCEQVYAVRLLGERETLE.

Lys10 is a catalytic residue. 94-104 (PVAAGLAGGSS) lines the ATP pocket. Asp136 is an active-site residue.

Belongs to the GHMP kinase family. IspE subfamily.

The enzyme catalyses 4-CDP-2-C-methyl-D-erythritol + ATP = 4-CDP-2-C-methyl-D-erythritol 2-phosphate + ADP + H(+). Its pathway is isoprenoid biosynthesis; isopentenyl diphosphate biosynthesis via DXP pathway; isopentenyl diphosphate from 1-deoxy-D-xylulose 5-phosphate: step 3/6. Catalyzes the phosphorylation of the position 2 hydroxy group of 4-diphosphocytidyl-2C-methyl-D-erythritol. In Bacillus mycoides (strain KBAB4) (Bacillus weihenstephanensis), this protein is 4-diphosphocytidyl-2-C-methyl-D-erythritol kinase.